The chain runs to 346 residues: MKTKRWFVDVTDELSTNDPQIAQAAALLRENEVVAFPTETVYGLGANAKNTDAVKKIYEAKGRPSDNPLIVHIADISQLEDLTGPAPEKAKTLMKRFWPGALTLILPCKPDALSPRVTAGLETVAIRMPDHPLALALIRESGLPIAAPSANLSGKPSPTKAEHVAHDLDGRIAGIVDGGPTGIGVESTVLSCADDIPVLLRPGGITKEQIEAVIGPIHVDKGLSDQNEKPISPGMKYTHYAPTAPLAICEGSPERIQHLIQEYQQGGRRVGVLTTEEKAGVYSADYVKSCGRRAQLETVAAGLYDALRSFDENKVDFIIAESFPDTGVGLAIMNRLMKAAGGRVIR.

The region spanning 18 to 205 (DPQIAQAAAL…IPVLLRPGGI (188 aa)) is the YrdC-like domain. L-threonine is bound at residue Thr-40. Arg-63 and Asn-67 together coordinate ATP. Residue His-72 coordinates L-threonine. Thr-123 is an ATP binding site. L-threonine is bound by residues Arg-127 and Ala-147. 2 residues coordinate ATP: Ser-149 and Ser-157. Ser-187 is an L-threonine binding site. Arg-201 and Tyr-240 together coordinate ATP.

The protein belongs to the SUA5 family.

It is found in the cytoplasm. The enzyme catalyses L-threonine + hydrogencarbonate + ATP = L-threonylcarbamoyladenylate + diphosphate + H2O. Its function is as follows. Required for the formation of a threonylcarbamoyl group on adenosine at position 37 (t(6)A37) in tRNAs that read codons beginning with adenine. Catalyzes the conversion of L-threonine, HCO(3)(-)/CO(2) and ATP to give threonylcarbamoyl-AMP (TC-AMP) as the acyladenylate intermediate, with the release of diphosphate. Is also able to catalyze the reverse reaction in vitro, i.e. the formation of ATP from TC-AMP and PPi. In Bacillus subtilis (strain 168), this protein is Threonylcarbamoyl-AMP synthase (ywlC).